The sequence spans 347 residues: Dual specificity mitogen-activated protein kinase kinase mek-1 (347 aa).

A disordered region spans residues 1 to 42; that stretch reads MERDFDLGMGRPGGLGGLGGEPIMQQMPQPAPHHPSRSSNDH. Residues 10–20 show a composition bias toward gly residues; the sequence is GRPGGLGGLGG. In terms of domain architecture, Protein kinase spans 72–325; sequence LQFVEDIGHG…YDMLLQHPFV (254 aa). ATP is bound by residues 78–86 and lysine 99; that span reads IGHGSCGTV. Aspartate 193 serves as the catalytic Proton acceptor. Serine 221 and serine 225 each carry phosphoserine.

Belongs to the protein kinase superfamily. STE Ser/Thr protein kinase family. MAP kinase kinase subfamily. In terms of assembly, interacts with shc-1; the interaction is independent of mek-1 catalytic activity, is constitutive and may facilitate mlk-1-mediated phosphorylation by bringing mlk-1 and mek-1 together. Requires Mg(2+) as cofactor. Post-translationally, may be phosphorylated at Ser-221 and/or Ser-225 by mlk-1. In terms of tissue distribution, expressed in pharyngeal muscles, uterine endothelial cells, intestine and in neurons of ring ganglia, ventral ganglion and ganglia around anus. Expressed also in hypodermis and body muscles.

It catalyses the reaction L-seryl-[protein] + ATP = O-phospho-L-seryl-[protein] + ADP + H(+). The enzyme catalyses L-threonyl-[protein] + ATP = O-phospho-L-threonyl-[protein] + ADP + H(+). The catalysed reaction is L-tyrosyl-[protein] + ATP = O-phospho-L-tyrosyl-[protein] + ADP + H(+). Its activity is regulated as follows. May be activated by phosphorylation at Ser-221 and Ser-225. Functionally, dual specificity protein kinase which may phosphorylate kgb-1 and thereby is an essential component of the JNK pathway composed of mlk-1, mek-1 and kgb-1. May also have a synergistic role with sek-1 in phosphorylating pmk-1. Involved in the response to environmental stress including heavy metal ions (Cu(2+) and Cd(2+)), oxidative stress and starvation. In association with sek-1, regulates germline cell apoptosis in response to oxidative, osmotic and heat shock stresses. Involved in resistance to pathogenic bacteria infection. Involved in axon regeneration after injury. The protein is Dual specificity mitogen-activated protein kinase kinase mek-1 of Caenorhabditis elegans.